We begin with the raw amino-acid sequence, 380 residues long: Zinc metalloproteinase-like protein nas-21 (380 aa).

The N-terminal stretch at methionine 1–glycine 24 is a signal peptide. A Peptidase M12A domain is found at glutamine 46–serine 234. Asparagine 87 carries an N-linked (GlcNAc...) asparagine glycan. 2 cysteine pairs are disulfide-bonded: cysteine 90–cysteine 233 and cysteine 110–cysteine 130. The active site involves glutamate 138. N-linked (GlcNAc...) asparagine glycans are attached at residues asparagine 253, asparagine 269, asparagine 283, and asparagine 304.

The protein resides in the secreted. Functionally, may lack metalloprotease activity. The polypeptide is Zinc metalloproteinase-like protein nas-21 (nas-21) (Caenorhabditis elegans).